A 102-amino-acid polypeptide reads, in one-letter code: METNDSDDRIEAIVSEESDELEVNSGTTEETNVLELLTIISGLVVTLVLVVLVVLVVVGVVVLVVLLVVVVLLCDVVVAVVDFEPDEPILIRRYPFLWIPFL.

2 helical membrane passes run 33-55 (VLEL…LVVL) and 57-79 (VVGV…VVVA).

It is found in the membrane. This is an uncharacterized protein from Saccharomyces cerevisiae (strain ATCC 204508 / S288c) (Baker's yeast).